Consider the following 305-residue polypeptide: MNKFTNLLIKRTASSLKGGDFRELFRKNYIPITQFEKVLLSVTSCVEGLKNPTDSNSVACITELTSNRALRRLQILMNSTPDGRRIIKNRPLIDSSKYSIKDLMAFPDDSLGRRYGEFLTTYNLEINRDPVRYVNSEDLAYVLTRFRQIHDILHTAFELNITVESEVTLKLFEFLHAGIPFGAIGAFMGLFITPILKVRPKEIFENHNKTHVYPSKPIQIHQDCDKYLNSLEITKKEILYPKRIVIKELIPWIYKAEKKMRHNIYTIMVEDWFPRPIADFQNYLNISPPPKQLQKYTRIKPMPFC.

The Zn(2+) site is built by histidine 150, aspartate 151, histidine 154, and glutamate 166.

Belongs to the COQ4 family. In terms of assembly, component of a multi-subunit COQ enzyme complex. Zn(2+) serves as cofactor.

It is found in the mitochondrion inner membrane. It catalyses the reaction a 4-hydroxy-3-methoxy-5-(all-trans-polyprenyl)benzoate + H(+) = a 2-methoxy-6-(all-trans-polyprenyl)phenol + CO2. It functions in the pathway cofactor biosynthesis; ubiquinone biosynthesis. In terms of biological role, lyase that catalyzes the C1-decarboxylation of 4-hydroxy-3-methoxy-5-(all-trans-polyprenyl)benzoic acid into 2-methoxy-6-(all-trans-polyprenyl)phenol during ubiquinone biosynthesis. The protein is Ubiquinone biosynthesis protein COQ4 homolog, mitochondrial of Cryptosporidium parvum (strain Iowa II).